A 122-amino-acid polypeptide reads, in one-letter code: Ribonuclease P protein component (122 aa).

This sequence belongs to the RnpA family. In terms of assembly, consists of a catalytic RNA component (M1 or rnpB) and a protein subunit.

It catalyses the reaction Endonucleolytic cleavage of RNA, removing 5'-extranucleotides from tRNA precursor.. Its function is as follows. RNaseP catalyzes the removal of the 5'-leader sequence from pre-tRNA to produce the mature 5'-terminus. It can also cleave other RNA substrates such as 4.5S RNA. The protein component plays an auxiliary but essential role in vivo by binding to the 5'-leader sequence and broadening the substrate specificity of the ribozyme. The sequence is that of Ribonuclease P protein component from Shouchella clausii (strain KSM-K16) (Alkalihalobacillus clausii).